Consider the following 509-residue polypeptide: Cytochrome P450 monooxygenase traB (509 aa).

The helical transmembrane segment at 8-28 (LVELVSITGGLIVLFIAYTGF) threads the bilayer. Cys453 contributes to the heme binding site.

This sequence belongs to the cytochrome P450 family. Heme serves as cofactor.

The protein resides in the membrane. Its pathway is secondary metabolite biosynthesis. Cytochrome P450 monooxygenase; part of the tra gene cluster that produces terrestric acid. The clavatol biosynthesis cluster cla and the terrestric acid cluster tra are both involved in the production of peniphenones and penilactones. The non-reducing PKS claF is responsible for the formation of clavatol from successive condensations of 3 malonyl-CoA units, presumably with a simple acetyl-CoA starter unit, and 2 methylation steps. The esterase claE probably collaborates with claF by catalyzing the hydrolysis of ACP-bound acyl intermediates to free the ACP from stalled intermediates. The clavatol oxidase claD then converts clavatol to hydroxyclavatol. Spontaneous dehydration of hydroxyclavatol leads to the accumulation of the highly active ortho-quinone methide. On the other hand, the PKS-NRPS hybrid traA is involved in the formation of crustosic acid, with the help of traB and traD. The polyketide synthase module (PKS) of traA is responsible for the synthesis of the polyketide backbone via the condensation of an acetyl-CoA starter unit with 3 malonyl-CoA units. The downstream nonribosomal peptide synthetase (NRPS) module then amidates the carboxyl end of the polyketide with L-malic acid. Because traA lacks a designated enoylreductase (ER) domain, the required activity is provided the enoyl reductase traG. Crustosic acid undergoes decarboxylation and isomerization to the terrestric acid, catalyzed by the 2-oxoglutarate-dependent dioxygenase traH. Both acids are further converted to the 2 gamma-butyrolactones (R)-5-methyltetronic acid and (S)-5-carboxylmethyltetronic acid, with involvement of the cytochrome P450 monooxygenase claJ. Spontaneous addition of the methide to these gamma-butyrolactones leads to peniphenone D and penilactone D, which undergo again stereospecific attacking by methide to give penilactones A and B. In Penicillium crustosum (Blue mold fungus), this protein is Cytochrome P450 monooxygenase traB.